Consider the following 233-residue polypeptide: Large ribosomal subunit protein uL1 (233 aa).

The protein belongs to the universal ribosomal protein uL1 family. In terms of assembly, part of the 50S ribosomal subunit.

Its function is as follows. Binds directly to 23S rRNA. The L1 stalk is quite mobile in the ribosome, and is involved in E site tRNA release. Protein L1 is also a translational repressor protein, it controls the translation of the L11 operon by binding to its mRNA. This is Large ribosomal subunit protein uL1 from Shewanella sp. (strain ANA-3).